The sequence spans 275 residues: Large ribosomal subunit protein uL2 (275 aa).

Residues 227 to 261 (PVDHPHGGGEAKSGQGNPHPVTPWGVPTKGYKTRK) are disordered.

It belongs to the universal ribosomal protein uL2 family. As to quaternary structure, part of the 50S ribosomal subunit. Forms a bridge to the 30S subunit in the 70S ribosome.

One of the primary rRNA binding proteins. Required for association of the 30S and 50S subunits to form the 70S ribosome, for tRNA binding and peptide bond formation. It has been suggested to have peptidyltransferase activity; this is somewhat controversial. Makes several contacts with the 16S rRNA in the 70S ribosome. The chain is Large ribosomal subunit protein uL2 from Xylella fastidiosa (strain M23).